Here is a 334-residue protein sequence, read N- to C-terminus: Anthranilate phosphoribosyltransferase (334 aa).

Residues Gly-79, 82 to 83 (GD), Ser-87, 89 to 92 (NIST), 107 to 115 (KHGNRSISS), and Ser-119 contribute to the 5-phospho-alpha-D-ribose 1-diphosphate site. Gly-79 is a binding site for anthranilate. Ser-91 contributes to the Mg(2+) binding site. An anthranilate-binding site is contributed by Asn-110. Arg-165 is an anthranilate binding site. Mg(2+) is bound by residues Asp-224 and Glu-225.

The protein belongs to the anthranilate phosphoribosyltransferase family. As to quaternary structure, homodimer. Mg(2+) serves as cofactor.

The enzyme catalyses N-(5-phospho-beta-D-ribosyl)anthranilate + diphosphate = 5-phospho-alpha-D-ribose 1-diphosphate + anthranilate. It participates in amino-acid biosynthesis; L-tryptophan biosynthesis; L-tryptophan from chorismate: step 2/5. Functionally, catalyzes the transfer of the phosphoribosyl group of 5-phosphorylribose-1-pyrophosphate (PRPP) to anthranilate to yield N-(5'-phosphoribosyl)-anthranilate (PRA). The polypeptide is Anthranilate phosphoribosyltransferase (Streptococcus gordonii (strain Challis / ATCC 35105 / BCRC 15272 / CH1 / DL1 / V288)).